Consider the following 186-residue polypeptide: Signal peptidase I (186 aa).

Residues 1 to 19 (MTEEKSTNKKNSLFEWVKA) lie on the Cytoplasmic side of the membrane. A helical transmembrane segment spans residues 20-40 (IIIAVVLALLIRAFLFEPYLV). Over 41–186 (EGTSMDPTLH…FPFNEIRKTD (146 aa)) the chain is Extracellular. Residues Ser-44 and Lys-86 contribute to the active site.

This sequence belongs to the peptidase S26 family.

The protein resides in the cell membrane. It catalyses the reaction Cleavage of hydrophobic, N-terminal signal or leader sequences from secreted and periplasmic proteins.. In Bacillus licheniformis, this protein is Signal peptidase I (lepB).